The chain runs to 43 residues: Neurotrophin-4 (43 aa).

Belongs to the NGF-beta family.

In terms of biological role, NT-4 could play a role in oogenesis and/or early embryogenesis. NT-4 interacts with the low affinity NGF receptor and elicits neurite outgrowth from explanted dorsal root ganglia with no and lower activity in sympathetic and nodose ganglia, respectively. In Macrovipera lebetinus (Levantine viper), this protein is Neurotrophin-4 (NTF4).